A 142-amino-acid chain; its full sequence is Hemoglobin subunit alpha (142 aa).

Residues 2–142 (VLSAADKSNV…VGTVLTSKYR (141 aa)) form the Globin domain. Ser4 bears the Phosphoserine mark. 2 positions are modified to N6-succinyllysine: Lys8 and Lys12. Lys17 bears the N6-acetyllysine; alternate mark. N6-succinyllysine; alternate is present on Lys17. A Phosphotyrosine modification is found at Tyr25. Phosphoserine is present on Ser36. Lys41 is subject to N6-succinyllysine. Residue Ser50 is modified to Phosphoserine. His59 provides a ligand contact to O2. His88 is a binding site for heme b. Ser103 carries the post-translational modification Phosphoserine. Thr109 carries the phosphothreonine modification. Phosphoserine is present on residues Ser125 and Ser132. Phosphothreonine occurs at positions 135 and 138. Ser139 is subject to Phosphoserine.

The protein belongs to the globin family. As to quaternary structure, heterotetramer of two alpha chains and two beta chains. Red blood cells.

Involved in oxygen transport from the lung to the various peripheral tissues. In terms of biological role, hemopressin acts as an antagonist peptide of the cannabinoid receptor CNR1. Hemopressin-binding efficiently blocks cannabinoid receptor CNR1 and subsequent signaling. The sequence is that of Hemoglobin subunit alpha (HBA) from Pantholops hodgsonii (Chiru).